The primary structure comprises 64 residues: Large ribosomal subunit protein uL1 (64 aa).

Belongs to the universal ribosomal protein uL1 family. In terms of assembly, part of the 50S ribosomal subunit.

Functionally, binds directly to 23S rRNA. The L1 stalk is quite mobile in the ribosome, and is involved in E site tRNA release. Protein L1 is also a translational repressor protein, it controls the translation of the L11 operon by binding to its mRNA. The chain is Large ribosomal subunit protein uL1 (rplA) from Streptomyces lavendulae.